The chain runs to 174 residues: Amino-acid acetyltransferase (174 aa).

One can recognise an N-acetyltransferase domain in the interval 10–148 (PVVRRARTSD…VFDEMCRSYD (139 aa)).

It belongs to the acetyltransferase family. In terms of assembly, homodimer and homotetramer.

It catalyses the reaction L-glutamate + acetyl-CoA = N-acetyl-L-glutamate + CoA + H(+). It functions in the pathway amino-acid biosynthesis; L-arginine biosynthesis; N(2)-acetyl-L-ornithine from L-glutamate: step 1/4. Its activity is regulated as follows. Inhibited by L-arginine. Catalyzes the conversion of L-glutamate to alpha-N-acetyl-L-glutamate. L-glutamine is a significantly better substrate compared to L-glutamate. This is Amino-acid acetyltransferase (argA) from Mycobacterium tuberculosis (strain ATCC 25618 / H37Rv).